The sequence spans 423 residues: Ferrochelatase, mitochondrial (423 aa).

The N-terminal 40 residues, 1 to 40, are a transit peptide targeting the mitochondrion; that stretch reads MIRFCPSCFALKRTAPVLNHTSRLGNYFNNTFSKFSVNRM. Residue C200 coordinates [2Fe-2S] cluster. The active site involves D385. 3 residues coordinate [2Fe-2S] cluster: C405, C408, and C413.

This sequence belongs to the ferrochelatase family. Monomer. [2Fe-2S] cluster is required as a cofactor.

Its subcellular location is the mitochondrion inner membrane. The protein resides in the cytoplasm. The protein localises to the nucleus. The enzyme catalyses heme b + 2 H(+) = protoporphyrin IX + Fe(2+). The protein operates within porphyrin-containing compound metabolism; protoheme biosynthesis; protoheme from protoporphyrin-IX: step 1/1. Functionally, catalyzes the ferrous insertion into protoporphyrin IX. The chain is Ferrochelatase, mitochondrial (hem15) from Schizosaccharomyces pombe (strain 972 / ATCC 24843) (Fission yeast).